Reading from the N-terminus, the 286-residue chain is Bifunctional protein FolD (286 aa).

NADP(+) contacts are provided by residues 165–167, serine 190, and valine 231; that span reads GRS.

This sequence belongs to the tetrahydrofolate dehydrogenase/cyclohydrolase family. As to quaternary structure, homodimer.

The catalysed reaction is (6R)-5,10-methylene-5,6,7,8-tetrahydrofolate + NADP(+) = (6R)-5,10-methenyltetrahydrofolate + NADPH. The enzyme catalyses (6R)-5,10-methenyltetrahydrofolate + H2O = (6R)-10-formyltetrahydrofolate + H(+). Its pathway is one-carbon metabolism; tetrahydrofolate interconversion. Catalyzes the oxidation of 5,10-methylenetetrahydrofolate to 5,10-methenyltetrahydrofolate and then the hydrolysis of 5,10-methenyltetrahydrofolate to 10-formyltetrahydrofolate. The chain is Bifunctional protein FolD from Bacillus cytotoxicus (strain DSM 22905 / CIP 110041 / 391-98 / NVH 391-98).